We begin with the raw amino-acid sequence, 288 residues long: Acetyl-coenzyme A carboxylase carboxyl transferase subunit beta (288 aa).

A CoA carboxyltransferase N-terminal domain is found at 34–288 (LFAKCPACKH…HLVAFHGGGQ (255 aa)). Positions 38, 41, 56, and 59 each coordinate Zn(2+). A C4-type zinc finger spans residues 38–59 (CPACKHMIYKKDLGLAKICPTC).

This sequence belongs to the AccD/PCCB family. In terms of assembly, acetyl-CoA carboxylase is a heterohexamer composed of biotin carboxyl carrier protein (AccB), biotin carboxylase (AccC) and two subunits each of ACCase subunit alpha (AccA) and ACCase subunit beta (AccD). Zn(2+) is required as a cofactor.

It localises to the cytoplasm. The enzyme catalyses N(6)-carboxybiotinyl-L-lysyl-[protein] + acetyl-CoA = N(6)-biotinyl-L-lysyl-[protein] + malonyl-CoA. It functions in the pathway lipid metabolism; malonyl-CoA biosynthesis; malonyl-CoA from acetyl-CoA: step 1/1. In terms of biological role, component of the acetyl coenzyme A carboxylase (ACC) complex. Biotin carboxylase (BC) catalyzes the carboxylation of biotin on its carrier protein (BCCP) and then the CO(2) group is transferred by the transcarboxylase to acetyl-CoA to form malonyl-CoA. The sequence is that of Acetyl-coenzyme A carboxylase carboxyl transferase subunit beta from Streptococcus pyogenes serotype M1.